A 177-amino-acid polypeptide reads, in one-letter code: MAGYQLWSPWTPLDESFQWLRHTTPTPSSKHPFKASPCFPHTPSDLEVQLCFQEVTLVLDSPFLESGVSPKLPCHTSELRTMNNKGLVRKPQPIRLSGVDSVFGRVITAQPPKWTGTFRVSDKSAFCKIISREHQWPIGLKEPQIQMTVTMCKQMLRSILLLYATYKKCTFALQHSK.

In Homo sapiens (Human), this protein is FANCD2 opposite strand protein (FANCD2OS).